The sequence spans 150 residues: UPF0178 protein Ssed_1350 (150 aa).

This sequence belongs to the UPF0178 family.

In Shewanella sediminis (strain HAW-EB3), this protein is UPF0178 protein Ssed_1350.